The sequence spans 903 residues: Protein translocase subunit SecA (903 aa).

Residues Gln-87, 105-109, and Asp-494 each bind ATP; that span reads GEGKT. Residues 861–883 form a disordered region; the sequence is SGSQGAAPRQPVRAEGKKVGRND. Positions 872-881 are enriched in basic and acidic residues; that stretch reads VRAEGKKVGR. Zn(2+) is bound by residues Cys-885, Cys-887, Cys-896, and Cys-897.

Belongs to the SecA family. As to quaternary structure, monomer and homodimer. Part of the essential Sec protein translocation apparatus which comprises SecA, SecYEG and auxiliary proteins SecDF. Other proteins may also be involved. Requires Zn(2+) as cofactor.

Its subcellular location is the cell membrane. It localises to the cytoplasm. The catalysed reaction is ATP + H2O + cellular proteinSide 1 = ADP + phosphate + cellular proteinSide 2.. Functionally, part of the Sec protein translocase complex. Interacts with the SecYEG preprotein conducting channel. Has a central role in coupling the hydrolysis of ATP to the transfer of proteins into and across the cell membrane, serving as an ATP-driven molecular motor driving the stepwise translocation of polypeptide chains across the membrane. In Symbiobacterium thermophilum (strain DSM 24528 / JCM 14929 / IAM 14863 / T), this protein is Protein translocase subunit SecA.